A 72-amino-acid polypeptide reads, in one-letter code: Translation initiation factor IF-1 (72 aa).

The 72-residue stretch at 1 to 72 (MAKEGAIEVE…TRGRIVYRYK (72 aa)) folds into the S1-like domain.

The protein belongs to the IF-1 family. As to quaternary structure, component of the 30S ribosomal translation pre-initiation complex which assembles on the 30S ribosome in the order IF-2 and IF-3, IF-1 and N-formylmethionyl-tRNA(fMet); mRNA recruitment can occur at any time during PIC assembly.

It localises to the cytoplasm. One of the essential components for the initiation of protein synthesis. Stabilizes the binding of IF-2 and IF-3 on the 30S subunit to which N-formylmethionyl-tRNA(fMet) subsequently binds. Helps modulate mRNA selection, yielding the 30S pre-initiation complex (PIC). Upon addition of the 50S ribosomal subunit IF-1, IF-2 and IF-3 are released leaving the mature 70S translation initiation complex. The sequence is that of Translation initiation factor IF-1 from Corynebacterium glutamicum (strain R).